Reading from the N-terminus, the 345-residue chain is MSNMMKALVKSKPEVGLWMEHVPVPEVGPNDVLIRVRKSAICGTDVHIWNWDQWAQKTIPVPMVVGHEFCGEIAEIGSAVTKYHVGERVSGEGHIVCGKCRNCRAGRGHLCRNTLGVGVNRPGSFGEFVCIPESNVVPIPDDIPDEVAAIFDPFGNAVHTALSFDLVGEDVLVTGAGPIGIMGAMVAKRSGARKVVITDINPNRLALAHKLGIDHVVDASKENLADVMKSIGMTEGFDVGLEMSGAAPAFRDMIDKMNNGGKIAILGIAPAGFEIDWNKVIFKMLNLKGIYGREMFETWYKMIAFVQGGLDVSPVITHRIGIDDFREGFEAMRSGNSGKVVMDWF.

A Zn(2+)-binding site is contributed by Cys42. Catalysis depends on charge relay system residues Thr44 and His47. Positions 67, 68, 97, 100, 103, and 111 each coordinate Zn(2+). Residues Ile179, Asp199, Arg204, 266–268, and 290–291 contribute to the NAD(+) site; these read LGI and IY.

This sequence belongs to the zinc-containing alcohol dehydrogenase family. Homotetramer. Zn(2+) is required as a cofactor.

The protein localises to the cytoplasm. The enzyme catalyses L-threonine + NAD(+) = (2S)-2-amino-3-oxobutanoate + NADH + H(+). It participates in amino-acid degradation; L-threonine degradation via oxydo-reductase pathway; glycine from L-threonine: step 1/2. Catalyzes the NAD(+)-dependent oxidation of L-threonine to 2-amino-3-ketobutyrate. The protein is L-threonine 3-dehydrogenase of Rhizobium rhizogenes (strain K84 / ATCC BAA-868) (Agrobacterium radiobacter).